A 179-amino-acid chain; its full sequence is Putative 5'(3')-deoxyribonucleotidase (179 aa).

Catalysis depends on D9, which acts as the Nucleophile. Residues D9, D11, and D135 each coordinate Mg(2+). The Proton donor role is filled by D11.

The protein belongs to the 5'(3')-deoxyribonucleotidase family. Requires Mg(2+) as cofactor.

Dephosphorylates the 5' and 2'(3')-phosphates of deoxyribonucleotides. This is Putative 5'(3')-deoxyribonucleotidase from Staphylococcus epidermidis (strain ATCC 35984 / DSM 28319 / BCRC 17069 / CCUG 31568 / BM 3577 / RP62A).